Here is a 620-residue protein sequence, read N- to C-terminus: Long-chain fatty acid transport protein 2 (620 aa).

Over 1 to 4 (MLSA) the chain is Lumenal. The helical transmembrane segment at 5-27 (IYTVLAGLLFLPLLVNLCCPYFF) threads the bilayer. Over 28–106 (QDIGYFLKVA…DHLGLRQGDC (79 aa)) the chain is Cytoplasmic. Residues 107-127 (VALLMGNEPAYVWLWLGLVKL) traverse the membrane as a helical segment. Topologically, residues 128–261 (GCAMACLNYN…SGLKADDVIY (134 aa)) are lumenal. 222-233 (YIYTSGTTGLPK) contributes to the AMP binding site. Residues 262 to 282 (ITLPFYHSAALLIGIHGCIVA) traverse the membrane as a helical segment. Residues 283 to 620 (GATLALRTKF…NAISAKTLKL (338 aa)) are Cytoplasmic-facing. The residue at position 291 (Lys-291) is an N6-acetyllysine. Residue Thr-577 is modified to Phosphothreonine.

It belongs to the ATP-dependent AMP-binding enzyme family. As to expression, expressed in liver, kidney, placenta, intestine, brain, heart, and colon. Predominantly expressed in liver. Expressed in liver, placenta, and intestine, but much lower relative to isoform 1.

Its subcellular location is the endoplasmic reticulum membrane. The protein localises to the peroxisome membrane. It is found in the cell membrane. The protein resides in the microsome. The catalysed reaction is a fatty acid(in) = a fatty acid(out). The enzyme catalyses (9Z)-octadecenoate(out) = (9Z)-octadecenoate(in). It catalyses the reaction a long-chain fatty acid + ATP + CoA = a long-chain fatty acyl-CoA + AMP + diphosphate. It carries out the reaction (5Z,8Z,11Z,14Z)-eicosatetraenoate + ATP + CoA = (5Z,8Z,11Z,14Z)-eicosatetraenoyl-CoA + AMP + diphosphate. The catalysed reaction is hexadecanoate + ATP + CoA = hexadecanoyl-CoA + AMP + diphosphate. The enzyme catalyses (9Z)-octadecenoate + ATP + CoA = (9Z)-octadecenoyl-CoA + AMP + diphosphate. It catalyses the reaction 3,7,11,15-tetramethylhexadecanoate + ATP + CoA = phytanoyl-CoA + AMP + diphosphate. It carries out the reaction (9Z,12Z,15Z)-octadecatrienoate + ATP + CoA = (9Z,12Z,15Z)-octadecatrienoyl-CoA + AMP + diphosphate. The catalysed reaction is 2,6,10,14-tetramethylpentadecanoate + ATP + CoA = pristanoyl-CoA + AMP + diphosphate. The enzyme catalyses (E)-hexadec-2-enoate + ATP + CoA = (2E)-hexadecenoyl-CoA + AMP + diphosphate. It catalyses the reaction a very long-chain fatty acid + ATP + CoA = a very long-chain fatty acyl-CoA + AMP + diphosphate. It carries out the reaction tetracosanoate + ATP + CoA = tetracosanoyl-CoA + AMP + diphosphate. The catalysed reaction is (4Z,7Z,10Z,13Z,16Z,19Z)-docosahexaenoate + ATP + CoA = (4Z,7Z,10Z,13Z,16Z,19Z)-docosahexaenoyl-CoA + AMP + diphosphate. The enzyme catalyses (25R)-3alpha,7alpha,12alpha-trihydroxy-5beta-cholestan-26-oate + ATP + CoA = (25R)-3alpha,7alpha,12alpha-trihydroxy-5beta-cholestan-26-oyl-CoA + AMP + diphosphate. In terms of biological role, mediates the import of long-chain fatty acids (LCFA) into the cell by facilitating their transport across cell membranes, playing an important role in hepatic fatty acid uptake. Also functions as an acyl-CoA ligase catalyzing the ATP-dependent formation of fatty acyl-CoA using LCFA and very-long-chain fatty acids (VLCFA) as substrates, which prevents fatty acid efflux from cells and might drive more fatty acid uptake. Plays a pivotal role in regulating available LCFA substrates from exogenous sources in tissues undergoing high levels of beta-oxidation or triglyceride synthesis. Can also activate branched-chain fatty acids such as phytanic acid and pristanic acid. May contribute to the synthesis of sphingosine-1-phosphate. Does not activate C24 bile acids, cholate and chenodeoxycholate. In vitro, activates 3-alpha,7-alpha,12-alpha-trihydroxy-5-beta-cholestanate (THCA), the C27 precursor of cholic acid deriving from the de novo synthesis from cholesterol. However, it is not critical for THCA activation and bile synthesis in vivo. Exhibits both long-chain fatty acids (LCFA) transport activity and acyl CoA synthetase towards very long-chain fatty acids. Shows a preference for generating CoA derivatives of n-3 fatty acids, which are preferentially trafficked into phosphatidylinositol. Its function is as follows. Exhibits long-chain fatty acids (LCFA) transport activity but lacks acyl CoA synthetase towards very long-chain fatty acids. The protein is Long-chain fatty acid transport protein 2 (SLC27A2) of Homo sapiens (Human).